A 229-amino-acid polypeptide reads, in one-letter code: Large ribosomal subunit protein uL1 (229 aa).

The protein belongs to the universal ribosomal protein uL1 family. Part of the 50S ribosomal subunit.

Functionally, binds directly to 23S rRNA. The L1 stalk is quite mobile in the ribosome, and is involved in E site tRNA release. In terms of biological role, protein L1 is also a translational repressor protein, it controls the translation of the L11 operon by binding to its mRNA. The chain is Large ribosomal subunit protein uL1 from Gemmatimonas aurantiaca (strain DSM 14586 / JCM 11422 / NBRC 100505 / T-27).